The following is a 499-amino-acid chain: Potassium voltage-gated channel subfamily A member 2 (499 aa).

Residues 1–26 (MTVATGDPADEAAALPGHPQDTYDPE) are disordered. The segment at 1-125 (MTVATGDPAD…YELGEEAMEM (125 aa)) is tetramerization domain. Residues 1-160 (MTVATGDPAD…LLFEYPESSG (160 aa)) are Cytoplasmic-facing. A helical transmembrane segment spans residues 161 to 182 (PARIIAIVSVMVILISIVSFCL). Over 183-221 (ETLPIFRDENEDMHGSGVTFHTYSNSTIGYQQSTSFTDP) the chain is Extracellular. Asn-207 carries N-linked (GlcNAc...) asparagine glycosylation. A helical membrane pass occupies residues 222 to 243 (FFIVETLCIIWFSFEFLVRFFA). Cys-244 carries the S-palmitoyl cysteine lipid modification. The Cytoplasmic segment spans residues 244 to 254 (CPSKAGFFTNI). The chain crosses the membrane as a helical span at residues 255–275 (MNIIDIVAIIPYFITLGTELA). Residues 276-289 (EKPEDAQQGQQAMS) are Extracellular-facing. Residues 290 to 310 (LAILRVIRLVRVFRIFKLSRH) traverse the membrane as a helical; Voltage-sensor segment. Over 311–325 (SKGLQILGQTLKASM) the chain is Cytoplasmic. Residues 312–325 (KGLQILGQTLKASM) form an S4-S5 linker region. A helical membrane pass occupies residues 326–347 (RELGLLIFFLFIGVILFSSAVY). Residues 348–361 (FAEADERESQFPSI) lie on the Extracellular side of the membrane. Positions 362-373 (PDAFWWAVVSMT) form an intramembrane region, helical. Positions 374–379 (TVGYGD) match the Selectivity filter motif. Residues 374–381 (TVGYGDMV) lie within the membrane without spanning it. Residues 382–388 (PTTIGGK) are Extracellular-facing. The chain crosses the membrane as a helical span at residues 389–417 (IVGSLCAIAGVLTIALPVPVIVSNFNYFY). Topologically, residues 418–499 (HRETEGEEQA…VNITKMLTDV (82 aa)) are cytoplasmic. Residue Tyr-429 is modified to Phosphotyrosine. Phosphoserine occurs at positions 434, 440, 441, and 449. Tyr-458 carries the post-translational modification Phosphotyrosine. The residue at position 468 (Ser-468) is a Phosphoserine. A PDZ-binding motif is present at residues 497–499 (TDV).

It belongs to the potassium channel family. A (Shaker) (TC 1.A.1.2) subfamily. Kv1.2/KCNA2 sub-subfamily. Homotetramer and heterotetramer with other channel-forming alpha subunits, such as KCNA1, KCNA4, KCNA5, KCNA6 and KCNA7. Channel activity is regulated by interaction with the beta subunits, including KCNAB1 and KCNAB2. Identified in a complex with KCNA1 and KCNAB2. Identified in a complex with KCNA5 and KCNAB1. Identified in a complex with KCNA4 and FYN. Interacts with the beta subunit KCNAB1. Interacts with PTK2B. Interacts (via C-terminus) with CTTN. Interacts (via N-terminal cytoplasmic domain) with RHOA (GTP-bound form); this regulates channel activity by reducing location at the cell surface in response to CHRM1 activation. Interacts with DRD2. Interacts with SIGMAR1; cocaine consumption leads to increased interaction. Interacts with ADAM22. Interacts (via C-terminus) with the PDZ domains of DLG1, DLG2 and DLG4. Interacts with CNTNAP2. Interacts with ADAM11. Interacts with LYNX1. Phosphorylated on tyrosine residues; phosphorylation increases in response to ischemia. Phosphorylated on tyrosine residues by activated PTK2B/PYK2. Phosphorylation on tyrosine residues suppresses ion channel activity. Phosphorylated on tyrosine residues in response to CHRM1 activation; this abolishes interaction with CTTN. This is probably due to endocytosis of the phosphorylated channel subunits. Phosphorylated on serine residues in response to increased cAMP levels; phosphorylation is apparently not catalyzed by PKA. In terms of processing, N-glycosylated, with complex, sialylated N-glycans. Detected in brain cortex. Detected in peroneal nerve in the juxtaparanodal regions of the node of Ranvier; expression is decreased in patients with diabetes mellitus that suffer from axonal neuropathy. Detected in paranodal and juxtanodal zones in myelinated spinal cord (at protein level).

Its subcellular location is the cell membrane. The protein resides in the membrane. It localises to the cell projection. The protein localises to the axon. It is found in the synapse. Its subcellular location is the endoplasmic reticulum membrane. The protein resides in the lamellipodium membrane. It localises to the synaptosome. The protein localises to the presynaptic cell membrane. It is found in the dendrite. Its subcellular location is the cell junction. The protein resides in the paranodal septate junction. The enzyme catalyses K(+)(in) = K(+)(out). Inhibited by 4-aminopyridine (4-AP) and charybdotoxin (CTX), but not by tetraethylammonium (TEA). Inhibited by dendrotoxin (DTX). Inhibited by tityustoxin-K alpha (TsTX-Kalpha), a toxin that is highly specific for KCNA2. Inhibited by maurotoxin. Inhibited by kappaM conotoxins kappaM-RIIIJ and kappaM-RIIIK; kappaM-RIIIJ has much higher affinity for channels containing KCNA2 than kappaM-RIIIK, with the exception of heterodimers formed by KCNA2 and KCNA7 where the opposite is true. In terms of biological role, voltage-gated potassium channel that mediates transmembrane potassium transport in excitable membranes, primarily in the brain and the central nervous system, but also in the cardiovascular system. Prevents aberrant action potential firing and regulates neuronal output. Forms tetrameric potassium-selective channels through which potassium ions pass in accordance with their electrochemical gradient. The channel alternates between opened and closed conformations in response to the voltage difference across the membrane. Can form functional homotetrameric channels and heterotetrameric channels that contain variable proportions of KCNA1, KCNA2, KCNA4, KCNA5, KCNA6, KCNA7, and possibly other family members as well; channel properties depend on the type of alpha subunits that are part of the channel. Channel properties are modulated by cytoplasmic beta subunits that regulate the subcellular location of the alpha subunits and promote rapid inactivation of delayed rectifier potassium channels. In vivo, membranes probably contain a mixture of heteromeric potassium channel complexes, making it difficult to assign currents observed in intact tissues to any particular potassium channel family member. Homotetrameric KCNA2 forms a delayed-rectifier potassium channel that opens in response to membrane depolarization, followed by slow spontaneous channel closure. In contrast, a heteromultimer formed by KCNA2 and KCNA4 shows rapid inactivation. Regulates neuronal excitability and plays a role as pacemaker in the regulation of neuronal action potentials. KCNA2-containing channels play a presynaptic role and prevent hyperexcitability and aberrant action potential firing. Response to toxins that are selective for KCNA2-containing potassium channels suggests that in Purkinje cells, dendritic subthreshold KCNA2-containing potassium channels prevent random spontaneous calcium spikes, suppressing dendritic hyperexcitability without hindering the generation of somatic action potentials, and thereby play an important role in motor coordination. Plays a role in the induction of long-term potentiation of neuron excitability in the CA3 layer of the hippocampus. May function as down-stream effector for G protein-coupled receptors and inhibit GABAergic inputs to basolateral amygdala neurons. May contribute to the regulation of neurotransmitter release, such as gamma-aminobutyric acid (GABA). Contributes to the regulation of the axonal release of the neurotransmitter dopamine. Reduced KCNA2 expression plays a role in the perception of neuropathic pain after peripheral nerve injury, but not acute pain. Plays a role in the regulation of the time spent in non-rapid eye movement (NREM) sleep. The protein is Potassium voltage-gated channel subfamily A member 2 (KCNA2) of Homo sapiens (Human).